We begin with the raw amino-acid sequence, 188 residues long: Xanthine phosphoribosyltransferase (188 aa).

Residues Leu-20 and Asn-27 each contribute to the xanthine site. 127–131 (AYGNA) is a binding site for 5-phospho-alpha-D-ribose 1-diphosphate. Lys-155 contacts xanthine.

This sequence belongs to the purine/pyrimidine phosphoribosyltransferase family. Xpt subfamily. Homodimer.

The protein resides in the cytoplasm. The catalysed reaction is XMP + diphosphate = xanthine + 5-phospho-alpha-D-ribose 1-diphosphate. It participates in purine metabolism; XMP biosynthesis via salvage pathway; XMP from xanthine: step 1/1. Its function is as follows. Converts the preformed base xanthine, a product of nucleic acid breakdown, to xanthosine 5'-monophosphate (XMP), so it can be reused for RNA or DNA synthesis. The sequence is that of Xanthine phosphoribosyltransferase from Parabacteroides distasonis (strain ATCC 8503 / DSM 20701 / CIP 104284 / JCM 5825 / NCTC 11152).